The following is a 91-amino-acid chain: MIPRVLILLTLVALFCACSTLAAVAHIEVDCIPPFTVYLLYGFVTLILICSLVTVVIAFIQFIDWVCVRIAYLRHHPQYRDRTIADLLRIL.

Over 1-4 the chain is Cytoplasmic; it reads MIPR. Positions 1–22 are cleaved as a propeptide — signal peptide; sequence MIPRVLILLTLVALFCACSTLA. A helical membrane pass occupies residues 5–25; sequence VLILLTLVALFCACSTLAAVA. Residues 26 to 34 lie on the Lumenal side of the membrane; the sequence is HIEVDCIPP. A helical transmembrane segment spans residues 35–60; it reads FTVYLLYGFVTLILICSLVTVVIAFI. Residues 61–91 lie on the Cytoplasmic side of the membrane; the sequence is QFIDWVCVRIAYLRHHPQYRDRTIADLLRIL.

The protein belongs to the adenoviridae E3-RID-alpha family. In terms of assembly, homodimer with only one chain cleaved by signal peptidase. Interacts with E3 RID-beta and E3 CR1-alpha. In terms of processing, the signal peptide is only cleaved partially by host signal peptidase. This results in two forms of the protein, one uncleaved with two transmembrane regions, and one cleaved with one transmembrane region.

The protein localises to the host membrane. It is found in the host endoplasmic reticulum. Functionally, prevents infected cell apoptosis induced by the host immune system. Acts by down-regulating a number of cell surface receptors in the tumor necrosis factor (TNF) receptor superfamily, namely FAS, TNFRSF10A/TRAIL receptor 1, and TNFRSF10B/TRAIL receptor 2. Down-regulation of these death receptors protects adenovirus-infected cells from apoptosis induced by the death receptor ligands Fas ligand and TRAIL. RID complex also down-regulates certain tyrosine kinase cell surface receptors, especially the epidermal growth factor receptor (EGFR). RID-mediated Fas and EGFR down-regulation occurs via endocytosis of the receptors into endosomes followed by transport to and degradation within lysosomes. This Homo sapiens (Human) protein is Pre-early 3 receptor internalization and degradation alpha protein.